The chain runs to 305 residues: Nod factor export ATP-binding protein I (305 aa).

The 230-residue stretch at 8 to 237 (IDLVGVRKSF…HIGCNVIEIY (230 aa)) folds into the ABC transporter domain. 40-47 (GPNGAGKS) serves as a coordination point for ATP.

This sequence belongs to the ABC transporter superfamily. Lipooligosaccharide exporter (TC 3.A.1.102) family. As to quaternary structure, the complex is composed of two ATP-binding proteins (NodI) and two transmembrane proteins (NodJ).

Its subcellular location is the cell inner membrane. Its function is as follows. Part of the ABC transporter complex NodIJ involved in the export of the nodulation factors (Nod factors), the bacterial signal molecules that induce symbiosis and subsequent nodulation induction. Nod factors are LCO (lipo-chitin oligosaccharide), a modified beta-1,4-linked N-acetylglucosamine oligosaccharide. This subunit is responsible for energy coupling to the transport system. The polypeptide is Nod factor export ATP-binding protein I (Bradyrhizobium sp. (strain SNU001)).